The chain runs to 426 residues: Tachykinins (426 aa).

Residues 1–116 (MQCDFRVHQD…IEDNLSHEFE (116 aa)) constitute a propeptide that is removed on maturation. Position 127 is an arginine amide (arginine 127). Positions 131–145 (GYLTPDFEDSYFRDE) are excised as a propeptide. Residue arginine 156 is modified to Arginine amide. A propeptide spanning residues 160–167 (VVSDDDYY) is cleaved from the precursor. The residue at position 178 (arginine 178) is an Arginine amide. Positions 182-235 (SLEEVLGEIEKKAAMDYYDTRDKKTYVFEYPEDYEKRLLASIRGKLKEFPMEWE) are excised as a propeptide. Residue arginine 246 is modified to Arginine amide. The propeptide occupies 250 to 259 (SLLDEIEELE). Arginine amide is present on arginine 270. Positions 274–291 (NALENYIDYYLDPDMDFD) are excised as a propeptide. Residues 299 to 329 (QGMRGKKDSDKRAPMGFQGMRGKRNTGQRFD) are disordered. An Arginine amide modification is found at arginine 302. Residues 306–308 (DSD) constitute a propeptide that is removed on maturation. Residue arginine 319 is modified to Arginine amide. Residues 323–358 (NTGQRFDTGINFNIRSSNEYQGTNNRRNALASCQLE) constitute a propeptide that is removed on maturation. Arginine amide is present on residues arginine 369 and arginine 386. The propeptide occupies 390-426 (WATAPYEDDSPFISVFDNTERIGVDGDSPAILGNSIS).

It belongs to the tachykinin family. In terms of tissue distribution, tachykinins (TK) are expressed throughout the nervous system. APMGFQGMR-amide is also expressed in the retrocerebral complex (at protein level).

It localises to the secreted. Tachykinins are active peptides which excite neurons, evoke behavioral responses, are potent vasodilators and secretagogues, and contract (directly or indirectly) many smooth muscles. The polypeptide is Tachykinins (Camponotus floridanus (Florida carpenter ant)).